Reading from the N-terminus, the 341-residue chain is Large ribosomal subunit protein uL3 (341 aa).

Disordered stretches follow at residues 1-31 (MGHRKLSSPRRGSAGLRPRKRSEELLPSPRS) and 234-261 (HRKGSRKVGTKGPSLGTPSYVPQPGQMG).

It belongs to the universal ribosomal protein uL3 family. Part of the 50S ribosomal subunit. Forms a cluster with proteins L14 and L24e.

Its function is as follows. One of the primary rRNA binding proteins, it binds directly near the 3'-end of the 23S rRNA, where it nucleates assembly of the 50S subunit. This Metallosphaera sedula (strain ATCC 51363 / DSM 5348 / JCM 9185 / NBRC 15509 / TH2) protein is Large ribosomal subunit protein uL3.